The sequence spans 189 residues: uncharacterized protein (189 aa).

The N-terminal stretch at M1–A20 is a signal peptide. The EF-hand domain occupies K74–L109. D87, S89, N91, R93, and E98 together coordinate Ca(2+).

The protein resides in the endoplasmic reticulum lumen. It localises to the golgi apparatus lumen. This is an uncharacterized protein from Schizosaccharomyces pombe (strain 972 / ATCC 24843) (Fission yeast).